A 123-amino-acid chain; its full sequence is Protein Wnt-7 (123 aa).

S1 is lipidated: O-palmitoleoyl serine; by PORCN. C89 and C104 are joined by a disulfide. N-linked (GlcNAc...) asparagine glycosylation occurs at N90.

It belongs to the Wnt family. Palmitoleoylation is required for efficient binding to frizzled receptors. Depalmitoleoylation leads to Wnt signaling pathway inhibition.

The protein resides in the secreted. It localises to the extracellular space. The protein localises to the extracellular matrix. Its function is as follows. Ligand for members of the frizzled family of seven transmembrane receptors. Probable developmental protein. May be a signaling molecule which affects the development of discrete regions of tissues. Is likely to signal over only few cell diameters. The protein is Protein Wnt-7 (WNT-7) of Evasterias troschelii (Mottled sea star).